Reading from the N-terminus, the 121-residue chain is uncharacterized protein (121 aa).

Disordered regions lie at residues 1–28 (MGCASAKHVATVQNEEEAQKGKNYQNGD) and 60–82 (QENLEKSASSNVRLKTNKEVPGL). Ser-95 and Ser-115 each carry phosphoserine.

As to expression, expressed in spleen, prostate, testis and uterus.

This is an uncharacterized protein from Homo sapiens (Human).